The primary structure comprises 482 residues: [Fructose-bisphosphate aldolase]-lysine N-methyltransferase, chloroplastic (482 aa).

Residues methionine 1–arginine 57 constitute a chloroplast transit peptide. In terms of domain architecture, SET spans glutamine 59–aspartate 282. S-adenosyl-L-methionine contacts are provided by residues glutamate 75–leucine 77 and arginine 217. The substrate site is built by arginine 217, arginine 221, and aspartate 234. Asparagine 237–histidine 238 contacts S-adenosyl-L-methionine. Substrate-binding residues include tyrosine 249, tyrosine 281, and tyrosine 294.

This sequence belongs to the class V-like SAM-binding methyltransferase superfamily. Plant protein-lysine LSMT methyltransferase family.

It localises to the plastid. Its subcellular location is the chloroplast stroma. The enzyme catalyses [fructose-bisphosphate aldolase]-L-lysine + 3 S-adenosyl-L-methionine = [fructose-bisphosphate aldolase]-N(6),N(6),N(6)-trimethyl-L-lysine + 3 S-adenosyl-L-homocysteine + 3 H(+). Protein-lysine methyltransferase methylating chloroplastic fructose 1,6-bisphosphate aldolases. Can also use with low efficiency gamma-tocopherol methyltransferase as substrate, but not a cytosolic aldolase. Able to interact with unmethylated Rubisco, but unlike in pea, the complex is catalytically unproductive. The polypeptide is [Fructose-bisphosphate aldolase]-lysine N-methyltransferase, chloroplastic (LSMT-L) (Arabidopsis thaliana (Mouse-ear cress)).